The chain runs to 279 residues: Shikimate dehydrogenase (NADP(+)) (279 aa).

Residues 17–19 (SLS) and Thr64 each bind shikimate. Catalysis depends on Lys68, which acts as the Proton acceptor. Asp80 is an NADP(+) binding site. Shikimate contacts are provided by Asn89 and Asp105. Residues 129–133 (GAGGS), 153–158 (NRTAKK), and Leu221 each bind NADP(+). Tyr223 serves as a coordination point for shikimate. Gly245 lines the NADP(+) pocket.

It belongs to the shikimate dehydrogenase family. In terms of assembly, homodimer.

The catalysed reaction is shikimate + NADP(+) = 3-dehydroshikimate + NADPH + H(+). Its pathway is metabolic intermediate biosynthesis; chorismate biosynthesis; chorismate from D-erythrose 4-phosphate and phosphoenolpyruvate: step 4/7. Functionally, involved in the biosynthesis of the chorismate, which leads to the biosynthesis of aromatic amino acids. Catalyzes the reversible NADPH linked reduction of 3-dehydroshikimate (DHSA) to yield shikimate (SA). This Idiomarina loihiensis (strain ATCC BAA-735 / DSM 15497 / L2-TR) protein is Shikimate dehydrogenase (NADP(+)).